Here is a 64-residue protein sequence, read N- to C-terminus: MGMRMMFTVFLLVVLATTVVSFTSDRASDGRKAAASDLITLTIKGCCSDPPCIANNPDLCGRRR.

The first 21 residues, 1-21 (MGMRMMFTVFLLVVLATTVVS), serve as a signal peptide directing secretion. A propeptide spanning residues 22–43 (FTSDRASDGRKAAASDLITLTI) is cleaved from the precursor. Intrachain disulfides connect Cys-46-Cys-52 and Cys-47-Cys-60. Residue Cys-60 is modified to Cysteine amide.

The protein belongs to the conotoxin A superfamily. In terms of tissue distribution, expressed by the venom duct.

It localises to the secreted. Functionally, may act as a toxin. The sequence is that of Conotoxin Vc1.3 from Conus victoriae (Queen Victoria cone).